The primary structure comprises 448 residues: Trigger factor (448 aa).

A PPIase FKBP-type domain is found at 163-248 (GDIVVIDFDG…VKDIRVPKAA (86 aa)).

It belongs to the FKBP-type PPIase family. Tig subfamily.

Its subcellular location is the cytoplasm. The enzyme catalyses [protein]-peptidylproline (omega=180) = [protein]-peptidylproline (omega=0). Involved in protein export. Acts as a chaperone by maintaining the newly synthesized protein in an open conformation. Functions as a peptidyl-prolyl cis-trans isomerase. In Rhodospirillum centenum (strain ATCC 51521 / SW), this protein is Trigger factor.